The chain runs to 501 residues: Capsid protein (501 aa).

Residues 78–98 (SEEGFPVEPKTEEKDIPSTSG) form a disordered region. The Nuclear localization signal motif lies at 122 to 125 (KRGF). The CCHC-type zinc finger occupies 431-448 (CKCWICHEEGHYANECPK).

This sequence belongs to the caulimoviridae capsid protein family. Interacts (via nuclear localization signal) with host importin alpha.

The protein resides in the virion. It localises to the host nucleus. Its function is as follows. Self assembles to form an icosahedral capsid, about 50 nm in diameter, nm, composed of 420 subunits of the viral capsid protein. The capsid encapsulates the genomic dsDNA. Following virus entry into host cell, provides nuclear import of the viral genome. Virus particles do not enter the nucleus, but dock at the nuclear membrane through the interaction with host importins. The polypeptide is Capsid protein (Cestrum parqui (CmYLCV)).